We begin with the raw amino-acid sequence, 42 residues long: Large ribosomal subunit protein bL36 (42 aa).

The protein belongs to the bacterial ribosomal protein bL36 family.

The chain is Large ribosomal subunit protein bL36 from Ehrlichia canis (strain Jake).